Consider the following 517-residue polypeptide: Beta-galactoside alpha-2,6-sialyltransferase 2 (517 aa).

Residues 1-10 (MKPNLKQWKQ) lie on the Cytoplasmic side of the membrane. Residues 11–31 (FMLFGICAWGLLFLVIFVYFT) traverse the membrane as a helical; Signal-anchor for type II membrane protein segment. Topologically, residues 32 to 517 (DSNSVEPVPS…IHCPIKDHIT (486 aa)) are lumenal. N-linked (GlcNAc...) asparagine glycosylation is found at Asn201, Asn298, and Asn328. 3 disulfide bridges follow: Cys244/Cys510, Cys287/Cys439, and Cys457/Cys468.

Belongs to the glycosyltransferase 29 family.

The protein resides in the golgi apparatus. The protein localises to the golgi stack membrane. The enzyme catalyses a beta-D-galactoside + CMP-N-acetyl-beta-neuraminate = an N-acetyl-alpha-neuraminyl-(2-&gt;6)-beta-D-galactosyl derivative + CMP + H(+). Transfers sialic acid from the donor of substrate CMP-sialic acid to galactose containing acceptor substrates. The chain is Beta-galactoside alpha-2,6-sialyltransferase 2 (st6gal2) from Xenopus tropicalis (Western clawed frog).